The following is a 368-amino-acid chain: Peptide chain release factor 2 (368 aa).

Q250 carries the post-translational modification N5-methylglutamine.

The protein belongs to the prokaryotic/mitochondrial release factor family. Post-translationally, methylated by PrmC. Methylation increases the termination efficiency of RF2.

Its subcellular location is the cytoplasm. Its function is as follows. Peptide chain release factor 2 directs the termination of translation in response to the peptide chain termination codons UGA and UAA. The sequence is that of Peptide chain release factor 2 from Chlamydia abortus (strain DSM 27085 / S26/3) (Chlamydophila abortus).